A 455-amino-acid polypeptide reads, in one-letter code: Bifunctional protein GlmU (455 aa).

The interval 1 to 227 is pyrophosphorylase; that stretch reads MLTDIVILAA…ATEALGVNDP (227 aa). Residues 8–11, Lys22, Gln73, 78–79, 100–102, Gly137, Glu152, Asn167, and Asn225 each bind UDP-N-acetyl-alpha-D-glucosamine; these read LAAG, GT, and YGD. Residue Asp102 participates in Mg(2+) binding. Asn225 contributes to the Mg(2+) binding site. Positions 228–248 are linker; the sequence is VQLAILERVFQRQQLRALQMQ. The N-acetyltransferase stretch occupies residues 249–455; sequence GLRVADPARV…HWQRPRRDKK (207 aa). Positions 331 and 349 each coordinate UDP-N-acetyl-alpha-D-glucosamine. The active-site Proton acceptor is the His361. The UDP-N-acetyl-alpha-D-glucosamine site is built by Tyr364 and Asn375. Residues Ala378, 384 to 385, Ser403, Ala421, and Arg438 each bind acetyl-CoA; that span reads NY. The interval 420 to 455 is disordered; sequence GAGSTITKEVPPGGLTLSRSPQRTIPHWQRPRRDKK.

In the N-terminal section; belongs to the N-acetylglucosamine-1-phosphate uridyltransferase family. It in the C-terminal section; belongs to the transferase hexapeptide repeat family. In terms of assembly, homotrimer. The cofactor is Mg(2+).

Its subcellular location is the cytoplasm. It catalyses the reaction alpha-D-glucosamine 1-phosphate + acetyl-CoA = N-acetyl-alpha-D-glucosamine 1-phosphate + CoA + H(+). The catalysed reaction is N-acetyl-alpha-D-glucosamine 1-phosphate + UTP + H(+) = UDP-N-acetyl-alpha-D-glucosamine + diphosphate. Its pathway is nucleotide-sugar biosynthesis; UDP-N-acetyl-alpha-D-glucosamine biosynthesis; N-acetyl-alpha-D-glucosamine 1-phosphate from alpha-D-glucosamine 6-phosphate (route II): step 2/2. The protein operates within nucleotide-sugar biosynthesis; UDP-N-acetyl-alpha-D-glucosamine biosynthesis; UDP-N-acetyl-alpha-D-glucosamine from N-acetyl-alpha-D-glucosamine 1-phosphate: step 1/1. It functions in the pathway bacterial outer membrane biogenesis; LPS lipid A biosynthesis. Its function is as follows. Catalyzes the last two sequential reactions in the de novo biosynthetic pathway for UDP-N-acetylglucosamine (UDP-GlcNAc). The C-terminal domain catalyzes the transfer of acetyl group from acetyl coenzyme A to glucosamine-1-phosphate (GlcN-1-P) to produce N-acetylglucosamine-1-phosphate (GlcNAc-1-P), which is converted into UDP-GlcNAc by the transfer of uridine 5-monophosphate (from uridine 5-triphosphate), a reaction catalyzed by the N-terminal domain. The chain is Bifunctional protein GlmU from Acidithiobacillus ferrooxidans (strain ATCC 23270 / DSM 14882 / CIP 104768 / NCIMB 8455) (Ferrobacillus ferrooxidans (strain ATCC 23270)).